Consider the following 196-residue polypeptide: Glycerol-3-phosphate acyltransferase (196 aa).

The next 6 helical transmembrane spans lie at 5–25 (VYLL…IIFC), 53–73 (FSAL…VLLA), 80–100 (PSEI…PLFF), 107–127 (GVAT…AAGL), 130–150 (WLIV…TALI), and 153–173 (FYIW…CCLL).

It belongs to the PlsY family. In terms of assembly, probably interacts with PlsX.

It is found in the cell inner membrane. It catalyses the reaction an acyl phosphate + sn-glycerol 3-phosphate = a 1-acyl-sn-glycero-3-phosphate + phosphate. It functions in the pathway lipid metabolism; phospholipid metabolism. Functionally, catalyzes the transfer of an acyl group from acyl-phosphate (acyl-PO(4)) to glycerol-3-phosphate (G3P) to form lysophosphatidic acid (LPA). This enzyme utilizes acyl-phosphate as fatty acyl donor, but not acyl-CoA or acyl-ACP. This chain is Glycerol-3-phosphate acyltransferase, found in Actinobacillus pleuropneumoniae serotype 7 (strain AP76).